Consider the following 335-residue polypeptide: Dihydroorotate dehydrogenase (quinone) (335 aa).

FMN is bound by residues 58–62 and Thr-82; that span reads AGADK. Lys-62 provides a ligand contact to substrate. 107–111 lines the substrate pocket; it reads NRNGF. FMN is bound by residues Asn-135 and Asn-168. Asn-168 provides a ligand contact to substrate. Catalysis depends on Ser-171, which acts as the Nucleophile. Asn-173 is a substrate binding site. FMN contacts are provided by Lys-213 and Gly-241. Residue 242–243 participates in substrate binding; that stretch reads NT. Residues Gly-264, Gly-293, and 314 to 315 contribute to the FMN site; that span reads YS.

It belongs to the dihydroorotate dehydrogenase family. Type 2 subfamily. Monomer. Requires FMN as cofactor.

The protein localises to the cell membrane. The catalysed reaction is (S)-dihydroorotate + a quinone = orotate + a quinol. It functions in the pathway pyrimidine metabolism; UMP biosynthesis via de novo pathway; orotate from (S)-dihydroorotate (quinone route): step 1/1. In terms of biological role, catalyzes the conversion of dihydroorotate to orotate with quinone as electron acceptor. The chain is Dihydroorotate dehydrogenase (quinone) from Actinobacillus pleuropneumoniae serotype 7 (strain AP76).